The primary structure comprises 314 residues: tRNA dimethylallyltransferase (314 aa).

12 to 19 contributes to the ATP binding site; sequence GPTASGKT. Substrate is bound at residue 14 to 19; the sequence is TASGKT. Interaction with substrate tRNA regions lie at residues 37–40 and 162–166; these read DSAL and QRIIR.

The protein belongs to the IPP transferase family. In terms of assembly, monomer. Requires Mg(2+) as cofactor.

The catalysed reaction is adenosine(37) in tRNA + dimethylallyl diphosphate = N(6)-dimethylallyladenosine(37) in tRNA + diphosphate. Functionally, catalyzes the transfer of a dimethylallyl group onto the adenine at position 37 in tRNAs that read codons beginning with uridine, leading to the formation of N6-(dimethylallyl)adenosine (i(6)A). The sequence is that of tRNA dimethylallyltransferase from Acinetobacter baumannii (strain SDF).